Consider the following 400-residue polypeptide: Tryptophan synthase beta chain (400 aa).

Lys91 is subject to N6-(pyridoxal phosphate)lysine.

Belongs to the TrpB family. As to quaternary structure, tetramer of two alpha and two beta chains. Pyridoxal 5'-phosphate serves as cofactor.

The catalysed reaction is (1S,2R)-1-C-(indol-3-yl)glycerol 3-phosphate + L-serine = D-glyceraldehyde 3-phosphate + L-tryptophan + H2O. Its pathway is amino-acid biosynthesis; L-tryptophan biosynthesis; L-tryptophan from chorismate: step 5/5. The beta subunit is responsible for the synthesis of L-tryptophan from indole and L-serine. The protein is Tryptophan synthase beta chain of Listeria monocytogenes serotype 4a (strain HCC23).